Reading from the N-terminus, the 119-residue chain is Protein phosphatase EYA4 (119 aa).

Belongs to the HAD-like hydrolase superfamily. EYA family. Requires Mg(2+) as cofactor.

It localises to the cytoplasm. The protein localises to the nucleus. It catalyses the reaction O-phospho-L-tyrosyl-[protein] + H2O = L-tyrosyl-[protein] + phosphate. Tyrosine phosphatase that specifically dephosphorylates 'Tyr-142' of histone H2AX (H2AXY142ph). 'Tyr-142' phosphorylation of histone H2AX plays a central role in DNA repair and acts as a mark that distinguishes between apoptotic and repair responses to genotoxic stress. Promotes efficient DNA repair by dephosphorylating H2AX, promoting the recruitment of DNA repair complexes containing MDC1. Its function as histone phosphatase probably explains its role in transcription regulation during organogenesis. May be involved in development of the eye. In Takifugu rubripes (Japanese pufferfish), this protein is Protein phosphatase EYA4 (eya4).